Here is a 185-residue protein sequence, read N- to C-terminus: Ribosome-recycling factor (185 aa).

Residues Leu142–Asp161 are disordered.

Belongs to the RRF family.

Its subcellular location is the cytoplasm. Responsible for the release of ribosomes from messenger RNA at the termination of protein biosynthesis. May increase the efficiency of translation by recycling ribosomes from one round of translation to another. The protein is Ribosome-recycling factor of Paenarthrobacter aurescens (strain TC1).